The following is a 495-amino-acid chain: Transmembrane protein 161A (495 aa).

Residues 1–28 (MALMGVQLVVSLLAVSIMQRMAPHLSFA) form the signal peptide. Over 29 to 99 (RWLLCNGSLL…VNVMDALVLR (71 aa)) the chain is Extracellular. An N-linked (GlcNAc...) asparagine glycan is attached at N34. A helical transmembrane segment spans residues 100 to 120 (FFVEYQWLIDFAVYATGIYLF). Residues 121 to 135 (TEGYYSVVDASKEVN) are Cytoplasmic-facing. A helical transmembrane segment spans residues 136-156 (IASIWCVLTVLFCLRTLYLLM). Topologically, residues 157–167 (SHYFLSEEGGE) are extracellular. The chain crosses the membrane as a helical span at residues 168–188 (RSVCLAFGFLSLLIAMLVLVV). At 189 to 227 (REDYLEFGLEPGFTSLFDNFEVFARKQGYEWSVPFTKLS) the chain is on the cytoplasmic side. The helical transmembrane segment at 228–248 (VKLGLAVICAFIGALLAFPGL) threads the bilayer. Over 249–265 (RLAQTHLDAVQMNADRP) the chain is Extracellular. A helical transmembrane segment spans residues 266–286 (MIQILLHMSFLSPLVIIVMWI). Residues 287 to 305 (KPIARDFLGNAPMGKTSVT) are Cytoplasmic-facing. The helical transmembrane segment at 306–326 (LLSSSAFSSVRLWTIVVLCVL) threads the bilayer. Residues 327 to 367 (RLLLTRYHLQAYLNLAQKWVEQMKKEAGRIAAIDIQRKVTR) are Extracellular-facing. A helical transmembrane segment spans residues 368 to 388 (IFCYLTVVTLQYLIPILLVLF). Residues 389–465 (STLALKSLGD…ALLTPIFFRG (77 aa)) lie on the Cytoplasmic side of the membrane. Residues 466 to 486 (IFAFLTWWVAACQLISSLFGI) form a helical membrane-spanning segment. Residues 487-495 (YFHQYLMHN) are Extracellular-facing.

Belongs to the TMEM161 family.

It localises to the membrane. In terms of biological role, may play a role in protection against oxidative stress. This is Transmembrane protein 161A (tmem161a) from Danio rerio (Zebrafish).